Here is a 130-residue protein sequence, read N- to C-terminus: MYSAMTRSINILVEPTYLEDQSEPDQDYYVWAYHVTIENKGPETVRLRARYWKITDATGHVHEVRGPGVVGEQPLLRPGEKFEYTSGTPLGAPSGIMFGNYEMETAEGEKFEVDIPAFSLDSPHAKRMLH.

The 125-residue stretch at 3 to 127 folds into the ApaG domain; that stretch reads SAMTRSINIL…FSLDSPHAKR (125 aa).

In Parvibaculum lavamentivorans (strain DS-1 / DSM 13023 / NCIMB 13966), this protein is Protein ApaG.